The primary structure comprises 66 residues: Large ribosomal subunit protein bL35 (66 aa).

The interval 21–40 (KIKSTQSAKRHGMTKRSKRS) is disordered. The span at 28 to 40 (AKRHGMTKRSKRS) shows a compositional bias: basic residues.

The protein belongs to the bacterial ribosomal protein bL35 family.

The polypeptide is Large ribosomal subunit protein bL35 (Ehrlichia canis (strain Jake)).